The following is a 506-amino-acid chain: MSFSVEVLAGIAIELQRGIGHQDRFQRLITTLRQVLACDASALLRYESRQFIPLAIDGLAQDVLGRRFTLEGHPRLEAIARAGDVVRFPADSDLPDPYDGLIPGQESLKVHACVGLPLFAGQNLIGALTLDAMTPEQFEVFSDEELRLVAALAAGALSNALLIEQLESQNMLPGSSGVFEPIKETHMIGLSPAMTQLKKEIEIVAGSDLNVLIGGETGTGKELVAKAIHQGSPRAVNPLVYLNCAALPESVAESELFGHVKGAFTGAISNRSGKFEMADNGTLFLDEIGELSLALQAKLLRVLQYGDIQRVGDDRSLRVDVRVLAATNRDLREEVLAGRFRADLFHRLSVFPLFVPPLRERGDDVVLLAGYFCEQCRLRLGLSRVVLSPGARRHLLNYGWPGNVRELEHAIHRAVVLARATRAGDEVVLEEQHFALSEDVLPAPSAESFLALPACRNLRESTENFQREMIRQALAQNNHNWAASARALETDVANLHRLAKRLGLKD.

Asp57 carries the post-translational modification 4-aspartylphosphate. Positions 187-416 constitute a Sigma-54 factor interaction domain; that stretch reads MIGLSPAMTQ…LEHAIHRAVV (230 aa). ATP-binding positions include 215-222 and 278-287; these read GETGTGKE and ADNGTLFLDE. The segment at residues 481-500 is a DNA-binding region (H-T-H motif); sequence WAASARALETDVANLHRLAK.

The protein operates within nitrogen metabolism; nitric oxide reduction. Functionally, required for the expression of anaerobic nitric oxide (NO) reductase, acts as a transcriptional activator for at least the norVW operon. Activation also requires sigma-54. The chain is Anaerobic nitric oxide reductase transcription regulator NorR from Salmonella choleraesuis (strain SC-B67).